The sequence spans 259 residues: MVQLTLPKNSRMRVGKTWPKPEGATNVRRFNIYRWDPDTGENPRIDTYFVDMDKCGPMVLDALIKIKNEIDPTLTFRRSCREGICGSCAMNIDGGNHLACIYGMDEIKGDVNIYPLPHMPVVKDLVPDLTHFYAQHASVQPYLITETPTPDKEWRQSIEDRKKLDGLYECVMCASCSTACPSYWWNGDRYLGPAALLHAYRWIIDSRDEATGERLDSLEDPFKLYRCHTIMNCTNTCPKGLNPAKAIASIKHMMVDRIV.

Positions 28-119 constitute a 2Fe-2S ferredoxin-type domain; it reads RRFNIYRWDP…DVNIYPLPHM (92 aa). 3 residues coordinate [2Fe-2S] cluster: cysteine 80, cysteine 85, and cysteine 100. Residues 160-190 enclose the 4Fe-4S ferredoxin-type domain; it reads DRKKLDGLYECVMCASCSTACPSYWWNGDRY. The [4Fe-4S] cluster site is built by cysteine 170, cysteine 173, and cysteine 176. A [3Fe-4S] cluster-binding site is contributed by cysteine 180. Tryptophan 185 lines the a ubiquinone pocket. 2 residues coordinate [3Fe-4S] cluster: cysteine 227 and cysteine 233. Cysteine 237 contacts [4Fe-4S] cluster.

The protein belongs to the succinate dehydrogenase/fumarate reductase iron-sulfur protein family. In terms of assembly, part of an enzyme complex containing four subunits: a flavoprotein, an iron-sulfur, cytochrome b-556, and a hydrophobic anchor protein. [2Fe-2S] cluster serves as cofactor. The cofactor is [3Fe-4S] cluster. Requires [4Fe-4S] cluster as cofactor.

The enzyme catalyses a quinone + succinate = fumarate + a quinol. It functions in the pathway carbohydrate metabolism; tricarboxylic acid cycle; fumarate from succinate (bacterial route): step 1/1. The protein is Succinate dehydrogenase iron-sulfur subunit (sdhB) of Paracoccus denitrificans.